The primary structure comprises 855 residues: Replication factor C small subunit (855 aa).

A DOD-type homing endonuclease domain is found at 185–308; it reads WLGYFLGGGY…IAYALAGFGI (124 aa).

Belongs to the activator 1 small subunits family. RfcS subfamily. As to quaternary structure, heteromultimer composed of small subunits (RfcS) and large subunits (RfcL). Post-translationally, this protein undergoes a protein self splicing that involves a post-translational excision of the intervening region (intein) followed by peptide ligation.

Part of the RFC clamp loader complex which loads the PCNA sliding clamp onto DNA. The polypeptide is Replication factor C small subunit (rfcS) (Pyrococcus horikoshii (strain ATCC 700860 / DSM 12428 / JCM 9974 / NBRC 100139 / OT-3)).